Consider the following 519-residue polypeptide: Cysteine--tRNA ligase (519 aa).

Cysteine 30 contributes to the Zn(2+) binding site. A 'HIGH' region motif is present at residues 32-42 (PTVYDRAHLGN). Zn(2+)-binding residues include cysteine 221, histidine 253, and glutamate 257. Residues 286-290 (KMSKS) carry the 'KMSKS' region motif. Lysine 289 is a binding site for ATP.

The protein belongs to the class-I aminoacyl-tRNA synthetase family. Monomer. Zn(2+) is required as a cofactor.

The protein localises to the cytoplasm. The enzyme catalyses tRNA(Cys) + L-cysteine + ATP = L-cysteinyl-tRNA(Cys) + AMP + diphosphate. This chain is Cysteine--tRNA ligase, found in Cereibacter sphaeroides (strain KD131 / KCTC 12085) (Rhodobacter sphaeroides).